Here is a 305-residue protein sequence, read N- to C-terminus: GTPase Era (305 aa).

The Era-type G domain maps to R13–E181. The tract at residues G21–S28 is G1. Residue G21–S28 participates in GTP binding. A G2 region spans residues Q47–H51. A G3 region spans residues D68–G71. GTP contacts are provided by residues D68–M72 and N130–D133. The segment at N130 to D133 is G4. The segment at L160 to A162 is G5. Residues V204–R288 form the KH type-2 domain.

The protein belongs to the TRAFAC class TrmE-Era-EngA-EngB-Septin-like GTPase superfamily. Era GTPase family. As to quaternary structure, monomer.

The protein resides in the cytoplasm. The protein localises to the cell inner membrane. In terms of biological role, an essential GTPase that binds both GDP and GTP, with rapid nucleotide exchange. Plays a role in 16S rRNA processing and 30S ribosomal subunit biogenesis and possibly also in cell cycle regulation and energy metabolism. This is GTPase Era from Marinobacter nauticus (strain ATCC 700491 / DSM 11845 / VT8) (Marinobacter aquaeolei).